Here is a 502-residue protein sequence, read N- to C-terminus: Probable cytochrome P450 6a23 (502 aa).

Residue Cys-445 participates in heme binding.

Belongs to the cytochrome P450 family. Heme serves as cofactor.

The protein localises to the endoplasmic reticulum membrane. It is found in the microsome membrane. Its function is as follows. May be involved in the metabolism of insect hormones and in the breakdown of synthetic insecticides. This chain is Probable cytochrome P450 6a23 (Cyp6a23), found in Drosophila melanogaster (Fruit fly).